The sequence spans 295 residues: Protein PAR32 (295 aa).

Alanine 2 bears the N-acetylalanine mark. A phosphoserine mark is found at serine 36, serine 39, serine 47, serine 123, serine 138, serine 141, and serine 147. A compositionally biased stretch (polar residues) spans 134–153 (SATRSHQSLHATTSSPNNNA). Disordered stretches follow at residues 134–156 (SATR…APIV) and 217–295 (TSKK…TMFN). Over residues 217-227 (TSKKPKNKLKG) the composition is skewed to basic residues. Serine 246 is modified (phosphoserine). Residues 246–256 (SPKSSRNTINH) are compositionally biased toward polar residues. Basic and acidic residues predominate over residues 265–274 (KFNLKDDNGK). Basic residues predominate over residues 275–284 (EKKKKKKKKS). A compositionally biased stretch (low complexity) spans 285-295 (GFFSSLKTMFN).

Post-translationally, hyperphosphorylated after treatment with rapamycin in a TAP42-dependent manner.

It localises to the cytoplasm. Functionally, involved in resistance to cisplatin. In Saccharomyces cerevisiae (strain ATCC 204508 / S288c) (Baker's yeast), this protein is Protein PAR32 (PAR32).